A 153-amino-acid chain; its full sequence is UPF0178 protein Atu1478 (153 aa).

This sequence belongs to the UPF0178 family.

The protein is UPF0178 protein Atu1478 of Agrobacterium fabrum (strain C58 / ATCC 33970) (Agrobacterium tumefaciens (strain C58)).